The primary structure comprises 272 residues: Shikimate dehydrogenase (NADP(+)) (272 aa).

Residues 14-16 and T61 contribute to the shikimate site; that span reads SKS. The active-site Proton acceptor is the K65. Shikimate contacts are provided by N86 and D102. NADP(+) is bound by residues 126-130, 150-155, and M214; these read GAGGA and NRTASK. Y216 lines the shikimate pocket. G239 lines the NADP(+) pocket.

It belongs to the shikimate dehydrogenase family. In terms of assembly, homodimer.

It carries out the reaction shikimate + NADP(+) = 3-dehydroshikimate + NADPH + H(+). It functions in the pathway metabolic intermediate biosynthesis; chorismate biosynthesis; chorismate from D-erythrose 4-phosphate and phosphoenolpyruvate: step 4/7. Involved in the biosynthesis of the chorismate, which leads to the biosynthesis of aromatic amino acids. Catalyzes the reversible NADPH linked reduction of 3-dehydroshikimate (DHSA) to yield shikimate (SA). The sequence is that of Shikimate dehydrogenase (NADP(+)) from Pseudoalteromonas atlantica (strain T6c / ATCC BAA-1087).